The following is a 263-amino-acid chain: 3-methyl-2-oxobutanoate hydroxymethyltransferase (263 aa).

Residues D45 and D84 each contribute to the Mg(2+) site. Residues 45–46, D84, and K112 contribute to the 3-methyl-2-oxobutanoate site; that span reads DS. Residue E114 participates in Mg(2+) binding. The active-site Proton acceptor is E181.

Belongs to the PanB family. Homodecamer; pentamer of dimers. It depends on Mg(2+) as a cofactor.

The protein resides in the cytoplasm. It carries out the reaction 3-methyl-2-oxobutanoate + (6R)-5,10-methylene-5,6,7,8-tetrahydrofolate + H2O = 2-dehydropantoate + (6S)-5,6,7,8-tetrahydrofolate. It functions in the pathway cofactor biosynthesis; (R)-pantothenate biosynthesis; (R)-pantoate from 3-methyl-2-oxobutanoate: step 1/2. In terms of biological role, catalyzes the reversible reaction in which hydroxymethyl group from 5,10-methylenetetrahydrofolate is transferred onto alpha-ketoisovalerate to form ketopantoate. The sequence is that of 3-methyl-2-oxobutanoate hydroxymethyltransferase from Chromohalobacter salexigens (strain ATCC BAA-138 / DSM 3043 / CIP 106854 / NCIMB 13768 / 1H11).